We begin with the raw amino-acid sequence, 244 residues long: 5-oxoprolinase subunit A (244 aa).

This sequence belongs to the LamB/PxpA family. Forms a complex composed of PxpA, PxpB and PxpC.

It carries out the reaction 5-oxo-L-proline + ATP + 2 H2O = L-glutamate + ADP + phosphate + H(+). Functionally, catalyzes the cleavage of 5-oxoproline to form L-glutamate coupled to the hydrolysis of ATP to ADP and inorganic phosphate. The sequence is that of 5-oxoprolinase subunit A from Salmonella schwarzengrund (strain CVM19633).